The following is a 95-amino-acid chain: Small ribosomal subunit protein bS6 (95 aa).

This sequence belongs to the bacterial ribosomal protein bS6 family.

Its function is as follows. Binds together with bS18 to 16S ribosomal RNA. This is Small ribosomal subunit protein bS6 (rpsF) from Halalkalibacterium halodurans (strain ATCC BAA-125 / DSM 18197 / FERM 7344 / JCM 9153 / C-125) (Bacillus halodurans).